The chain runs to 543 residues: NXPE family member 4 (543 aa).

An N-terminal signal peptide occupies residues 1–26 (MKTLASRKSLWMLLFIVIFWVSFTVF). Residues Asn-91, Asn-159, and Asn-223 are each glycosylated (N-linked (GlcNAc...) asparagine).

Belongs to the NXPE family.

It is found in the secreted. The chain is NXPE family member 4 (Nxpe4) from Mus musculus (Mouse).